Reading from the N-terminus, the 100-residue chain is Phosphoribosylformylglycinamidine synthase subunit PurS (100 aa).

Belongs to the PurS family. As to quaternary structure, homodimer. Part of the FGAM synthase complex composed of 1 PurL, 1 PurQ and 2 PurS subunits.

Its subcellular location is the cytoplasm. It carries out the reaction N(2)-formyl-N(1)-(5-phospho-beta-D-ribosyl)glycinamide + L-glutamine + ATP + H2O = 2-formamido-N(1)-(5-O-phospho-beta-D-ribosyl)acetamidine + L-glutamate + ADP + phosphate + H(+). Its pathway is purine metabolism; IMP biosynthesis via de novo pathway; 5-amino-1-(5-phospho-D-ribosyl)imidazole from N(2)-formyl-N(1)-(5-phospho-D-ribosyl)glycinamide: step 1/2. Functionally, part of the phosphoribosylformylglycinamidine synthase complex involved in the purines biosynthetic pathway. Catalyzes the ATP-dependent conversion of formylglycinamide ribonucleotide (FGAR) and glutamine to yield formylglycinamidine ribonucleotide (FGAM) and glutamate. The FGAM synthase complex is composed of three subunits. PurQ produces an ammonia molecule by converting glutamine to glutamate. PurL transfers the ammonia molecule to FGAR to form FGAM in an ATP-dependent manner. PurS interacts with PurQ and PurL and is thought to assist in the transfer of the ammonia molecule from PurQ to PurL. The protein is Phosphoribosylformylglycinamidine synthase subunit PurS of Synechocystis sp. (strain ATCC 27184 / PCC 6803 / Kazusa).